We begin with the raw amino-acid sequence, 115 residues long: Secapin (115 aa).

The signal sequence occupies residues 1 to 24 (MRFQVYILHLCFFILVVLTYLSQG). Residues 25–90 (QSYTTTTTTS…STENFDITNR (66 aa)) constitute a propeptide that is removed on maturation. A disulfide bridge connects residues Cys99 and Cys110.

Belongs to the secapin family. In terms of tissue distribution, expressed in the epidermis, fat body and venom gland.

The protein resides in the secreted. Functionally, serine protease inhibitor which exhibits antifibrinolytic, antielastolytic and antimicrobial activities. Displays antimicrobial activity against bacteria and fungi. Likely functions in the innate immune response to microbial infection and possibly in the venom, as an antifibrinolytic agent. The recombinant form inhibits trypsin (IC(50)=80.02 nM, Ki=127.25 nM), chymotrypsin (IC(50)=393.78 nM, Ki=432.59 nM), the microbial serine proteases subtilisin A (IC(50)=379.20 nM, Ki=492.77 nM) and proteinase K (IC(50)=189.43 nM, Ki=271.76 nM), plasmin (IC(50)=457.98 nM, Ki=502.91 nM), human elastase (IC(50)=347.81 nM, Ki=469.90 nM) and porcine elastase (IC(50)=94.70 nM, Ki=125.62 nM). Does not inhibit thrombin. Binds to human plasmin and inhibits the plasmin-mediated degradation of fibrin to fibrin degradation products, indicating its role as an anti-fibrinolytic agent. Also binds to bacterial and fungal surfaces. Exhibits antimicrobial activity against the Gram-positive bacteria B.thuringiensis (MIC=4.21 uM) and P.larvae (MIC=11.13 uM), the Gram-negative bacteria E.coli (MIC=6.50 uM) and the multidrug-resistant A.baumannii (MIC=5 ug/ml, MBC=10 ug/ml), as well as against the fungus B.bassiana (IC(50)=2.57 uM). The synthetic peptide also exhibits antimicrobial activity against the Gram-positive bacterium P.larvae (MIC=41.12 uM), the Gram-negative bacterium P.aeruginosa (MIC=65.75 uM), and the fungus B.bassiana (IC(50)=44.27 uM). Is also able to prevent A.baumannii biofilm formation and eliminate established A.baumannii biofilms. In vitro, does not induce an inflammatory response and has no cytotoxic activity against mammalian cells. The polypeptide is Secapin (Apis cerana (Indian honeybee)).